A 271-amino-acid polypeptide reads, in one-letter code: Nuclear egress protein 2 (271 aa).

Residues 1–249 (MSVVGKRVVD…LGRAVALVRR (249 aa)) lie on the Perinuclear space side of the membrane. Residues 250-267 (SWPWISAGIAFLCLGLVW) traverse the membrane as a helical segment. Residues 268–271 (MRPS) are Nuclear-facing.

Belongs to the herpesviridae NEC2 protein family. As to quaternary structure, forms a heterohexameric complex with NEC1. In terms of processing, phosphorylated.

The protein resides in the host nucleus inner membrane. Functionally, plays an essential role in virion nuclear egress, the first step of virion release from infected cell. Within the host nucleus, NEC1 interacts with the newly formed capsid through the vertexes and directs it to the inner nuclear membrane by associating with NEC2. Induces the budding of the capsid at the inner nuclear membrane as well as its envelopment into the perinuclear space. There, the NEC1/NEC2 complex promotes the fusion of the enveloped capsid with the outer nuclear membrane and the subsequent release of the viral capsid into the cytoplasm where it will reach the secondary budding sites in the host Golgi or trans-Golgi network. The protein is Nuclear egress protein 2 of Homo sapiens (Human).